The sequence spans 740 residues: Arf-GAP with coiled-coil, ANK repeat and PH domain-containing protein 1 (740 aa).

Residues 1–226 (MTVKLDFEEC…RKELGAQLHQ (226 aa)) form the BAR domain. The required for formation of endosomal tubules when overexpressed with PIP5K1C stretch occupies residues 1-382 (MTVKLDFEEC…RGPGQGSGHL (382 aa)). The PH domain maps to 265-360 (GLVMEGHLFK…WVSAVQSSIA (96 aa)). Residues 405–527 (GHVVAQVQSV…KFLTKLPEIR (123 aa)) form the Arf-GAP domain. Positions 405-740 (GHVVAQVQSV…SRRSHDLHTL (336 aa)) are required for interaction with GULP1. Residues 420–443 (CCDCREPAPEWASINLGVTLCIQC) form a C4-type zinc finger. Y485 is subject to 3'-nitrotyrosine. Residues 525 to 566 (EIRGRRGGRGRPRGQPPVPPKPSIRPRPGSLRSKPEPPSEDL) are prevents interaction with ITGB1 when S-554 is not phosphorylated. The disordered stretch occupies residues 525–581 (EIRGRRGGRGRPRGQPPVPPKPSIRPRPGSLRSKPEPPSEDLGSLHPGALLFRASGH). The span at 538 to 549 (GQPPVPPKPSIR) shows a compositional bias: pro residues. Position 554 is a phosphoserine; by PKB (S554). ANK repeat units follow at residues 606–635 (DNATPLIQATAANSLLACEFLLQNGANVNQ), 639–668 (AGRGPLHHATILGHTGLACLFLKRGADLGA), and 672–702 (EGRDPLTIAMETANADIVTLLRLAKMREAEA).

In terms of assembly, banana-shaped homodimer laterally assembling into tetramers, the tetramers further pack helically onto the membrane. Interacts with GTP-bound ARF6. Interacts with third cytoplasmic loop of SLC2A4/GLUT4. Interacts with CLTC. Interacts with GULP1. Forms a complex with GDP-bound ARF6 and GULP1. Interacts with ITGB1; required for ITGB1 recycling. In terms of processing, phosphorylation at Ser-554 by PKB is required for interaction with ITGB1, export of ITGB1 from recycling endosomes to the cell surface and ITGB1-dependent cell migration. In terms of tissue distribution, highest level in lung and spleen. Low level in heart, kidney, liver and pancreas.

Its subcellular location is the recycling endosome membrane. Its activity is regulated as follows. GAP activity stimulated by phosphatidylinositol 4,5-bisphosphate (PIP2) and phosphatidic acid. Its function is as follows. GTPase-activating protein (GAP) for ADP ribosylation factor 6 (ARF6) required for clathrin-dependent export of proteins from recycling endosomes to trans-Golgi network and cell surface. Required for regulated export of ITGB1 from recycling endosomes to the cell surface and ITGB1-dependent cell migration. This chain is Arf-GAP with coiled-coil, ANK repeat and PH domain-containing protein 1 (ACAP1), found in Homo sapiens (Human).